A 538-amino-acid polypeptide reads, in one-letter code: Chaperonin GroEL (538 aa).

ATP is bound by residues 30 to 33 (TLGP), 87 to 91 (DGTTT), Gly-415, 479 to 481 (DAA), and Asp-495.

Belongs to the chaperonin (HSP60) family. Forms a cylinder of 14 subunits composed of two heptameric rings stacked back-to-back. Interacts with the co-chaperonin GroES.

Its subcellular location is the cytoplasm. It carries out the reaction ATP + H2O + a folded polypeptide = ADP + phosphate + an unfolded polypeptide.. Functionally, together with its co-chaperonin GroES, plays an essential role in assisting protein folding. The GroEL-GroES system forms a nano-cage that allows encapsulation of the non-native substrate proteins and provides a physical environment optimized to promote and accelerate protein folding. In Dictyoglomus turgidum (strain DSM 6724 / Z-1310), this protein is Chaperonin GroEL.